The primary structure comprises 387 residues: Anhydro-N-acetylmuramic acid kinase (387 aa).

Position 17–24 (17–24 (GTSMDGVD)) interacts with ATP.

The protein belongs to the anhydro-N-acetylmuramic acid kinase family.

The catalysed reaction is 1,6-anhydro-N-acetyl-beta-muramate + ATP + H2O = N-acetyl-D-muramate 6-phosphate + ADP + H(+). The protein operates within amino-sugar metabolism; 1,6-anhydro-N-acetylmuramate degradation. Its pathway is cell wall biogenesis; peptidoglycan recycling. Its function is as follows. Catalyzes the specific phosphorylation of 1,6-anhydro-N-acetylmuramic acid (anhMurNAc) with the simultaneous cleavage of the 1,6-anhydro ring, generating MurNAc-6-P. Is required for the utilization of anhMurNAc either imported from the medium or derived from its own cell wall murein, and thus plays a role in cell wall recycling. The sequence is that of Anhydro-N-acetylmuramic acid kinase from Burkholderia pseudomallei (strain K96243).